A 270-amino-acid polypeptide reads, in one-letter code: MAKVPDLFEDLKNCYSENEDYSSAIDHLSLNQKSFYDASYGSLHETCTDQFVSLRTSETSKMSNFTFKESRVTVSATSSNGKILKKRRLSFSETFTEDDLQSITHDLEETIQPRSAPYTYQSDLRYKLMKLVRQKFVMNDSLNQTIYQDVDKHYLSTTWLNDLQQEVKFDMYAYSSGGDDSKYPVTLKISDSQLFVSAQGEDQPVLLKELPETPKLITGSETDLIFFWKSINSKNYFTSAAYPELFIATKEQSRVHLARGLPSMTDFQIS.

A propeptide spanning residues 1-114 is cleaved from the precursor; sequence MAKVPDLFED…HDLEETIQPR (114 aa). An N-linked (GlcNAc...) asparagine glycan is attached at N64. K85 is subject to N6-acetyllysine. The tract at residues 85-89 is nuclear localization signal (NLS); it reads KKRRL. S90 carries the post-translational modification Phosphoserine. 2 N-linked (GlcNAc...) asparagine glycosylation sites follow: N139 and N143.

This sequence belongs to the IL-1 family. In terms of assembly, monomer. Interacts with TMED10; the interaction mediates the translocation from the cytoplasm into the ERGIC (endoplasmic reticulum-Golgi intermediate compartment) and thereby secretion. Interacts with IL1R1. Interacts with S100A13; this interaction is the first step in the export of IL1A, followed by direct translocation of this complex across the plasma membrane. Acetylated within its nuclear localization sequence, which impacts subcellular localization. Post-translationally, proteolytic processed by CAPN1 in a calcium-dependent manner. Cleavage from 31 kDa precursor to 18 kDa biologically active molecules. In terms of processing, phosphorylated. Phosphorylation greatly enhances susceptibility to digestion and promotes the conversion of pre-IL1A alpha to the biologically active IL1A.

It localises to the nucleus. Its subcellular location is the cytoplasm. The protein resides in the secreted. Its function is as follows. Cytokine constitutively present intracellularly in nearly all resting non-hematopoietic cells that plays an important role in inflammation and bridges the innate and adaptive immune systems. After binding to its receptor IL1R1 together with its accessory protein IL1RAP, forms the high affinity interleukin-1 receptor complex. Signaling involves the recruitment of adapter molecules such as MYD88, IRAK1 or IRAK4. In turn, mediates the activation of NF-kappa-B and the three MAPK pathways p38, p42/p44 and JNK pathways. Within the cell, acts as an alarmin and cell death results in its liberation in the extracellular space after disruption of the cell membrane to induce inflammation and alert the host to injury or damage. In addition to its role as a danger signal, which occurs when the cytokine is passively released by cell necrosis, directly senses DNA damage and acts as a signal for genotoxic stress without loss of cell integrity. This is Interleukin-1 alpha from Mus musculus (Mouse).